The sequence spans 130 residues: Glycine cleavage system H protein (130 aa).

The 82-residue stretch at 22–103 (QAWIGISDYA…PYANYIVVVA (82 aa)) folds into the Lipoyl-binding domain. The residue at position 63 (lysine 63) is an N6-lipoyllysine.

Belongs to the GcvH family. In terms of assembly, the glycine cleavage system is composed of four proteins: P, T, L and H. (R)-lipoate is required as a cofactor.

In terms of biological role, the glycine cleavage system catalyzes the degradation of glycine. The H protein shuttles the methylamine group of glycine from the P protein to the T protein. The polypeptide is Glycine cleavage system H protein (Syntrophomonas wolfei subsp. wolfei (strain DSM 2245B / Goettingen)).